The sequence spans 156 residues: Sec-independent protein translocase protein TatB (156 aa).

Residues 2 to 22 form a helical membrane-spanning segment; sequence FSSVGWGEIFLLVVVGLVVIG. Residues 100–156 form a disordered region; the sequence is KIMAEGTEGEAQRNKQAADNNANVVERPADGSTARPTQNDPKDGPNYSGGVSWTDII. Over residues 113-122 the composition is skewed to polar residues; it reads NKQAADNNAN.

It belongs to the TatB family. In terms of assembly, the Tat system comprises two distinct complexes: a TatABC complex, containing multiple copies of TatA, TatB and TatC subunits, and a separate TatA complex, containing only TatA subunits. Substrates initially bind to the TatABC complex, which probably triggers association of the separate TatA complex to form the active translocon.

It localises to the cell membrane. Its function is as follows. Part of the twin-arginine translocation (Tat) system that transports large folded proteins containing a characteristic twin-arginine motif in their signal peptide across membranes. Together with TatC, TatB is part of a receptor directly interacting with Tat signal peptides. TatB may form an oligomeric binding site that transiently accommodates folded Tat precursor proteins before their translocation. This chain is Sec-independent protein translocase protein TatB, found in Corynebacterium glutamicum (strain ATCC 13032 / DSM 20300 / JCM 1318 / BCRC 11384 / CCUG 27702 / LMG 3730 / NBRC 12168 / NCIMB 10025 / NRRL B-2784 / 534).